A 202-amino-acid chain; its full sequence is Probable nicotinate-nucleotide adenylyltransferase (202 aa).

It belongs to the NadD family.

The enzyme catalyses nicotinate beta-D-ribonucleotide + ATP + H(+) = deamido-NAD(+) + diphosphate. It participates in cofactor biosynthesis; NAD(+) biosynthesis; deamido-NAD(+) from nicotinate D-ribonucleotide: step 1/1. In terms of biological role, catalyzes the reversible adenylation of nicotinate mononucleotide (NaMN) to nicotinic acid adenine dinucleotide (NaAD). In Synechococcus sp. (strain JA-2-3B'a(2-13)) (Cyanobacteria bacterium Yellowstone B-Prime), this protein is Probable nicotinate-nucleotide adenylyltransferase.